The sequence spans 757 residues: 5-methyltetrahydropteroyltriglutamate--homocysteine methyltransferase (757 aa).

5-methyltetrahydropteroyltri-L-glutamate is bound by residues 17-20 (RELK) and K115. L-homocysteine is bound by residues 430 to 432 (IGS) and E483. L-methionine-binding positions include 430-432 (IGS) and E483. Residues 514 to 515 (RC) and W560 each bind 5-methyltetrahydropteroyltri-L-glutamate. D598 contacts L-homocysteine. D598 is an L-methionine binding site. Position 604 (E604) interacts with 5-methyltetrahydropteroyltri-L-glutamate. Zn(2+)-binding residues include H640, C642, and E664. H693 (proton donor) is an active-site residue. C725 lines the Zn(2+) pocket.

It belongs to the vitamin-B12 independent methionine synthase family. It depends on Zn(2+) as a cofactor.

The catalysed reaction is 5-methyltetrahydropteroyltri-L-glutamate + L-homocysteine = tetrahydropteroyltri-L-glutamate + L-methionine. It functions in the pathway amino-acid biosynthesis; L-methionine biosynthesis via de novo pathway; L-methionine from L-homocysteine (MetE route): step 1/1. Functionally, catalyzes the transfer of a methyl group from 5-methyltetrahydrofolate to homocysteine resulting in methionine formation. This is 5-methyltetrahydropteroyltriglutamate--homocysteine methyltransferase from Buchnera aphidicola subsp. Schizaphis graminum (strain Sg).